A 241-amino-acid chain; its full sequence is MLRQARPLVVLIAVTFLVASEVFSMALASDQNSNVASITSQVQRLLRTHHATIKVNADSEERFLTEPPLTTDEMMAMMKAGKSKNAYAFELGIAGQMADFINSGLPDIETFKKTPEFQKYEFYMNFLNDMRKDDDYKPLVEMIKKNKGETEAFKTLLVKVEDSVSKKKASPSAIVKLDPLNREQAIVEKIELALKKNQALNKNKASLETIEHTVRMAAKSKPSTWKIFKIISRLKKLKLKR.

A signal peptide spans M1 to S20. A RxLR-dEER motif is present at residues R44–R62.

Belongs to the RxLR effector family.

The protein resides in the secreted. It is found in the host cell membrane. Functionally, effector that suppresses flg22-induced post-translational MAP kinase activation in tomato but not in Arabidopsis. The perception of highly conserved pathogen- or microbe-associated molecular patterns (PAMPs/MAMPs), such as flg22, triggers converging signaling pathways recruiting MAP kinase cascades and inducing transcriptional re-programming, yielding a generic antimicrobial response. The polypeptide is RxLR effector protein SFI5 (Phytophthora infestans (strain T30-4) (Potato late blight agent)).